A 329-amino-acid polypeptide reads, in one-letter code: Secretory carrier-associated membrane protein 2 (329 aa).

Residues M1–P74 are disordered. Residues M1 to Y153 are Cytoplasmic-facing. Composition is skewed to polar residues over residues Q19–Q31 and F40–A51. A helical membrane pass occupies residues Y154–F174. The Lumenal portion of the chain corresponds to T175–G181. The chain crosses the membrane as a helical span at residues T182–W202. Over Y203 to F218 the chain is Cytoplasmic. Residues Y203 to F218 form an interaction with SLC9A7 region. A helical membrane pass occupies residues F219–L239. Residues P240–T262 lie on the Lumenal side of the membrane. The chain crosses the membrane as a helical span at residues I263–L283. Residues Q284–N329 are Cytoplasmic-facing. S319 and S320 each carry phosphoserine.

Belongs to the SCAMP family. Interacts with SLC6A4 and SLC9A7. Interacts with SLC9A5; this interaction regulates SLC9A5 cell-surface targeting and SLC9A5 activity.

Its subcellular location is the golgi apparatus. The protein localises to the trans-Golgi network membrane. It is found in the recycling endosome membrane. Functionally, functions in post-Golgi recycling pathways. Acts as a recycling carrier to the cell surface. In Mus musculus (Mouse), this protein is Secretory carrier-associated membrane protein 2 (Scamp2).